The following is a 358-amino-acid chain: tRNA-specific 2-thiouridylase MnmA 2 (358 aa).

ATP is bound by residues 11–18 and M37; that span reads GMSGGVDS. Residue C106 is the Nucleophile of the active site. C106 and C202 are oxidised to a cystine. Residue G130 participates in ATP binding. The tract at residues 152–154 is interaction with tRNA; it reads KDQ. The Cysteine persulfide intermediate role is filled by C202. The interaction with tRNA stretch occupies residues 308–309; it reads RY.

The protein belongs to the MnmA/TRMU family.

It is found in the cytoplasm. It catalyses the reaction S-sulfanyl-L-cysteinyl-[protein] + uridine(34) in tRNA + AH2 + ATP = 2-thiouridine(34) in tRNA + L-cysteinyl-[protein] + A + AMP + diphosphate + H(+). In terms of biological role, catalyzes the 2-thiolation of uridine at the wobble position (U34) of tRNA, leading to the formation of s(2)U34. The polypeptide is tRNA-specific 2-thiouridylase MnmA 2 (Clostridium tetani (strain Massachusetts / E88)).